The sequence spans 438 residues: 23S rRNA (uracil(1939)-C(5))-methyltransferase RlmD (438 aa).

The TRAM domain occupies 10-69 (KASVNTKHQSVDVVRLDHNGAGIAFVDKKPVFIEGALPGEKAIIQFIEQKKQFSRAKLIK). [4Fe-4S] cluster is bound by residues Cys82, Cys88, Cys91, and Cys169. S-adenosyl-L-methionine contacts are provided by Gln272, Phe301, Asn306, Glu322, Asn349, and Asp370. The Nucleophile role is filled by Cys396.

This sequence belongs to the class I-like SAM-binding methyltransferase superfamily. RNA M5U methyltransferase family. RlmD subfamily.

The enzyme catalyses uridine(1939) in 23S rRNA + S-adenosyl-L-methionine = 5-methyluridine(1939) in 23S rRNA + S-adenosyl-L-homocysteine + H(+). In terms of biological role, catalyzes the formation of 5-methyl-uridine at position 1939 (m5U1939) in 23S rRNA. The sequence is that of 23S rRNA (uracil(1939)-C(5))-methyltransferase RlmD from Aliivibrio fischeri (strain ATCC 700601 / ES114) (Vibrio fischeri).